The following is a 141-amino-acid chain: Large ribosomal subunit protein uL11 (141 aa).

Belongs to the universal ribosomal protein uL11 family. Part of the ribosomal stalk of the 50S ribosomal subunit. Interacts with L10 and the large rRNA to form the base of the stalk. L10 forms an elongated spine to which L12 dimers bind in a sequential fashion forming a multimeric L10(L12)X complex. In terms of processing, one or more lysine residues are methylated.

In terms of biological role, forms part of the ribosomal stalk which helps the ribosome interact with GTP-bound translation factors. This chain is Large ribosomal subunit protein uL11, found in Trichlorobacter lovleyi (strain ATCC BAA-1151 / DSM 17278 / SZ) (Geobacter lovleyi).